The primary structure comprises 338 residues: Glycerol-3-phosphate dehydrogenase [NAD(P)+] (338 aa).

Positions 13, 14, and 108 each coordinate NADPH. Sn-glycerol 3-phosphate is bound by residues K108, G139, and S141. NADPH is bound at residue A143. Sn-glycerol 3-phosphate-binding residues include K194, D247, S257, R258, and N259. The active-site Proton acceptor is the K194. R258 is a binding site for NADPH. Positions 282 and 284 each coordinate NADPH.

It belongs to the NAD-dependent glycerol-3-phosphate dehydrogenase family.

Its subcellular location is the cytoplasm. The catalysed reaction is sn-glycerol 3-phosphate + NAD(+) = dihydroxyacetone phosphate + NADH + H(+). It catalyses the reaction sn-glycerol 3-phosphate + NADP(+) = dihydroxyacetone phosphate + NADPH + H(+). Its pathway is membrane lipid metabolism; glycerophospholipid metabolism. Its function is as follows. Catalyzes the reduction of the glycolytic intermediate dihydroxyacetone phosphate (DHAP) to sn-glycerol 3-phosphate (G3P), the key precursor for phospholipid synthesis. The sequence is that of Glycerol-3-phosphate dehydrogenase [NAD(P)+] from Streptococcus pneumoniae (strain Hungary19A-6).